Reading from the N-terminus, the 207-residue chain is Cytochrome c oxidase subunit 3 (207 aa).

5 helical membrane-spanning segments follow: residues 28 to 48, 70 to 90, 102 to 122, 144 to 164, and 186 to 206; these read FLGF…LFAT, VVFM…YAIY, LWFG…IYEF, LVGT…TLMI, and WHFI…MGMV.

Belongs to the cytochrome c oxidase subunit 3 family.

The protein localises to the cell membrane. The enzyme catalyses 4 Fe(II)-[cytochrome c] + O2 + 8 H(+)(in) = 4 Fe(III)-[cytochrome c] + 2 H2O + 4 H(+)(out). In Bacillus sp. (strain PS3), this protein is Cytochrome c oxidase subunit 3 (ctaE).